The sequence spans 348 residues: DNA-directed RNA polymerase subunit alpha (348 aa).

Positions 1–243 (MLIKQGDRLI…DQISVFINFD (243 aa)) are alpha N-terminal domain (alpha-NTD). The segment at 260–348 (VNENLFKGID…WLKRKQQNEA (89 aa)) is alpha C-terminal domain (alpha-CTD).

Belongs to the RNA polymerase alpha chain family. As to quaternary structure, homodimer. The RNAP catalytic core consists of 2 alpha, 1 beta, 1 beta' and 1 omega subunit. When a sigma factor is associated with the core the holoenzyme is formed, which can initiate transcription.

The catalysed reaction is RNA(n) + a ribonucleoside 5'-triphosphate = RNA(n+1) + diphosphate. Functionally, DNA-dependent RNA polymerase catalyzes the transcription of DNA into RNA using the four ribonucleoside triphosphates as substrates. The chain is DNA-directed RNA polymerase subunit alpha from Oleidesulfovibrio alaskensis (strain ATCC BAA-1058 / DSM 17464 / G20) (Desulfovibrio alaskensis).